The sequence spans 151 residues: Large ribosomal subunit protein bL9 (151 aa).

This sequence belongs to the bacterial ribosomal protein bL9 family.

Its function is as follows. Binds to the 23S rRNA. This is Large ribosomal subunit protein bL9 from Bordetella bronchiseptica (strain ATCC BAA-588 / NCTC 13252 / RB50) (Alcaligenes bronchisepticus).